Consider the following 1588-residue polypeptide: Pentafunctional AROM polypeptide (1588 aa).

A 3-dehydroquinate synthase region spans residues 1 to 392 (MVQLAKVPIL…YGDSAQFVSD (392 aa)). Residues 43–45 (DTN), 78–81 (ETSK), 109–111 (GGV), and Asp-114 each bind NAD(+). Arg-125 is a 7-phospho-2-dehydro-3-deoxy-D-arabino-heptonate binding site. An NAD(+)-binding site is contributed by 134–135 (TS). The 7-phospho-2-dehydro-3-deoxy-D-arabino-heptonate site is built by Asp-141 and Lys-147. An NAD(+)-binding site is contributed by Lys-156. Residue Asn-157 coordinates 7-phospho-2-dehydro-3-deoxy-D-arabino-heptonate. Residues 174–177 (WLET) and Asn-185 each bind NAD(+). Residue Glu-189 participates in Zn(2+) binding. Residues 189–192 (EVIK) and Lys-258 each bind 7-phospho-2-dehydro-3-deoxy-D-arabino-heptonate. The active-site Proton acceptor; for 3-dehydroquinate synthase activity is Glu-268. 7-phospho-2-dehydro-3-deoxy-D-arabino-heptonate-binding positions include 272-276 (RNLLN) and His-279. His-279 lines the Zn(2+) pocket. Residue His-283 is the Proton acceptor; for 3-dehydroquinate synthase activity of the active site. 7-phospho-2-dehydro-3-deoxy-D-arabino-heptonate-binding residues include His-295 and Lys-364. His-295 lines the Zn(2+) pocket. The interval 405-871 (VYPFKDIPAD…WDVLHSELGA (467 aa)) is EPSP synthase. Cys-853 (for EPSP synthase activity) is an active-site residue. Positions 890-1080 (SVVIIGMRAA…IPSGRSAFVC (191 aa)) are shikimate kinase. ATP is bound at residue 895–902 (GMRAAGKT). The segment at 1081 to 1293 (LTFDDLTEQT…AAPGQLTVAQ (213 aa)) is 3-dehydroquinase. The Proton acceptor; for 3-dehydroquinate dehydratase activity role is filled by His-1198. Lys-1227 (schiff-base intermediate with substrate; for 3-dehydroquinate dehydratase activity) is an active-site residue. The interval 1306 to 1588 (PKELFVVGKP…KAIFDAVTKE (283 aa)) is shikimate dehydrogenase.

This sequence in the N-terminal section; belongs to the sugar phosphate cyclases superfamily. Dehydroquinate synthase family. In the 2nd section; belongs to the EPSP synthase family. The protein in the 3rd section; belongs to the shikimate kinase family. It in the 4th section; belongs to the type-I 3-dehydroquinase family. This sequence in the C-terminal section; belongs to the shikimate dehydrogenase family. As to quaternary structure, homodimer. Zn(2+) serves as cofactor.

The protein resides in the cytoplasm. It catalyses the reaction 7-phospho-2-dehydro-3-deoxy-D-arabino-heptonate = 3-dehydroquinate + phosphate. The enzyme catalyses 3-dehydroquinate = 3-dehydroshikimate + H2O. It carries out the reaction shikimate + NADP(+) = 3-dehydroshikimate + NADPH + H(+). The catalysed reaction is shikimate + ATP = 3-phosphoshikimate + ADP + H(+). It catalyses the reaction 3-phosphoshikimate + phosphoenolpyruvate = 5-O-(1-carboxyvinyl)-3-phosphoshikimate + phosphate. It functions in the pathway metabolic intermediate biosynthesis; chorismate biosynthesis; chorismate from D-erythrose 4-phosphate and phosphoenolpyruvate: step 2/7. It participates in metabolic intermediate biosynthesis; chorismate biosynthesis; chorismate from D-erythrose 4-phosphate and phosphoenolpyruvate: step 3/7. Its pathway is metabolic intermediate biosynthesis; chorismate biosynthesis; chorismate from D-erythrose 4-phosphate and phosphoenolpyruvate: step 4/7. The protein operates within metabolic intermediate biosynthesis; chorismate biosynthesis; chorismate from D-erythrose 4-phosphate and phosphoenolpyruvate: step 5/7. It functions in the pathway metabolic intermediate biosynthesis; chorismate biosynthesis; chorismate from D-erythrose 4-phosphate and phosphoenolpyruvate: step 6/7. In terms of biological role, the AROM polypeptide catalyzes 5 consecutive enzymatic reactions in prechorismate polyaromatic amino acid biosynthesis. In Saccharomyces cerevisiae (strain YJM789) (Baker's yeast), this protein is Pentafunctional AROM polypeptide.